We begin with the raw amino-acid sequence, 294 residues long: Formate dehydrogenase, nitrate-inducible, iron-sulfur subunit (294 aa).

Residues 1 to 256 lie on the Periplasmic side of the membrane; it reads MAMETQDIIK…DTSVSLWKGA (256 aa). 4Fe-4S ferredoxin-type domains are found at residues 30-58, 91-123, 124-153, and 158-189; these read VAKL…IRDE, LEWL…QYAN, GIVD…LNKE, and YKCT…FGTK. Positions 39, 42, 45, 49, 100, 103, 108, 112, 133, 136, 139, 143, 160, 163, 175, and 179 each coordinate [4Fe-4S] cluster. A helical membrane pass occupies residues 257–279; it reads LKPLAAAGFIATFAGLIFHYIGI. Topologically, residues 280–294 are cytoplasmic; it reads GPNKEVDDDEEDHHE.

Trimer of heterotrimers, consisting of subunits alpha, beta and gamma. [4Fe-4S] cluster is required as a cofactor.

It is found in the cell inner membrane. Functionally, formate dehydrogenase allows E.coli to use formate as major electron donor during anaerobic respiration, when nitrate is used as electron acceptor. The beta subunit FdnH is an electron transfer unit containing 4 iron-sulfur clusters; it serves as a conduit for electrons that are transferred from the formate oxidation site in the alpha subunit (FdnG) to the menaquinone associated with the gamma subunit (FdnI) of formate dehydrogenase-N. Formate dehydrogenase-N is part of a system that generates proton motive force, together with the dissimilatory nitrate reductase (Nar). The protein is Formate dehydrogenase, nitrate-inducible, iron-sulfur subunit (fdnH) of Escherichia coli (strain K12).